Consider the following 312-residue polypeptide: Olfactory receptor 2L2 (312 aa).

Topologically, residues 1 to 24 are extracellular; sequence MENYNQTSTDFILLGLFPQSRIGL. An N-linked (GlcNAc...) asparagine glycan is attached at Asn-5. A helical membrane pass occupies residues 25–48; sequence FVFTLIFLIFLMALIGNLSMILLI. Over 49–56 the chain is Cytoplasmic; the sequence is FLDIHLHT. The chain crosses the membrane as a helical span at residues 57 to 78; that stretch reads PMYFLLSQLSLIDLNYISTIVP. Over 79–99 the chain is Extracellular; it reads KMVYDFLYGNKSISFTGCGIQ. Residue Asn-88 is glycosylated (N-linked (GlcNAc...) asparagine). Cysteines 96 and 188 form a disulfide. A helical transmembrane segment spans residues 100–119; the sequence is SFFFLTLAVAEGLLLTSMAY. The Cytoplasmic segment spans residues 120–138; it reads DRYVAICFPLHYPIRISKR. Residues 139–157 form a helical membrane-spanning segment; sequence VCVMMITGSWMISSINSCA. Topologically, residues 158-194 are extracellular; it reads HTVYALCIPYCKSRAINHFFCDVPAMLTLACTDTWVY. Residues 195–218 traverse the membrane as a helical segment; it reads ESTVFLSSTIFLVLPFTGIACSYG. Residues 219 to 235 are Cytoplasmic-facing; sequence RVLLAVYRMHSAEGRKK. A helical transmembrane segment spans residues 236–258; sequence AYSTCSTHLTVVSFYYAPFAYTY. At 259–271 the chain is on the extracellular side; sequence VRPRSLRSPTEDK. A helical transmembrane segment spans residues 272–291; the sequence is ILAVFYTILTPMLNPIIYSL. Residues 292–312 are Cytoplasmic-facing; that stretch reads RNKEVMGALTQVIQKIFSVKM.

The protein belongs to the G-protein coupled receptor 1 family.

Its subcellular location is the cell membrane. In terms of biological role, odorant receptor. The chain is Olfactory receptor 2L2 (OR2L2) from Homo sapiens (Human).